We begin with the raw amino-acid sequence, 30 residues long: Mycofactocin precursor peptide (30 aa).

This sequence belongs to the mycofactocin precursor peptide family. As to quaternary structure, interacts with MftB. In terms of processing, the post-translational modifications that lead to mycofactocin involve oxidative decarboxylation of the C-terminal tyrosine residue catalyzed by MftC, introduction of a tyramine-valine cross-link, removal of the modified C-terminal dipeptide by MftE. The released dipeptide then undergoes oxidative deamination by MftD, glycosylation by MftF and methylation by an unknown enzyme.

In terms of biological role, precursor peptide that leads to mycofactocin (MFT) after extensive post-translational modifications by enzymes encoded by adjacent genes. Mycofactocin acts as a redox cofactor of nicotinamide-dependent oxidoreductases encoded in the same locus. The chain is Mycofactocin precursor peptide from Mycobacterium ulcerans (strain Agy99).